We begin with the raw amino-acid sequence, 581 residues long: Probable CDP-diacylglycerol--glycerol-3-phosphate 3-phosphatidyltransferase (581 aa).

The interval 27 to 65 is disordered; sequence RSATTTTTTTTKACGNGSSQSPPSTPLLSSKSSTITSNK. Residues 44-65 are compositionally biased toward low complexity; it reads SSQSPPSTPLLSSKSSTITSNK. 160-167 provides a ligand contact to ATP; the sequence is ASLYLGTS. 2 consecutive PLD phosphodiesterase domains span residues 248–274 and 487–520; these read TIGV…SKDY and DKWT…GSRS. Active-site residues include His253, Lys255, and Asp260.

The protein belongs to the CDP-alcohol phosphatidyltransferase class-II family.

It carries out the reaction a CDP-1,2-diacyl-sn-glycerol + sn-glycerol 3-phosphate = a 1,2-diacyl-sn-glycero-3-phospho-(1'-sn-glycero-3'-phosphate) + CMP + H(+). It participates in phospholipid metabolism; phosphatidylglycerol biosynthesis; phosphatidylglycerol from CDP-diacylglycerol: step 1/2. In terms of biological role, functions in the biosynthesis of the anionic phospholipids phosphatidylglycerol and cardiolipin. The chain is Probable CDP-diacylglycerol--glycerol-3-phosphate 3-phosphatidyltransferase (pgs1) from Dictyostelium discoideum (Social amoeba).